The chain runs to 321 residues: p-hydroxybenzoic acid efflux pump subunit AaeA (321 aa).

A helical transmembrane segment spans residues 22–42 (VVITLVIVLCAIVAIFRVWAF).

The protein belongs to the membrane fusion protein (MFP) (TC 8.A.1) family.

It localises to the cell inner membrane. Forms an efflux pump with AaeB. The protein is p-hydroxybenzoic acid efflux pump subunit AaeA of Pectobacterium atrosepticum (strain SCRI 1043 / ATCC BAA-672) (Erwinia carotovora subsp. atroseptica).